The following is a 548-amino-acid chain: Elongator complex protein 3 (548 aa).

One can recognise a Radical SAM core domain in the interval 83–373 (RTASGIAVVA…YRVQRDIPMP (291 aa)). Positions 100, 110, and 113 each coordinate [4Fe-4S] cluster. Residues lysine 165, 475-478 (ELHV), 498-500 (FGM), and tyrosine 531 contribute to the acetyl-CoA site. The N-acetyltransferase domain maps to 397–548 (TECRDVRTRE…EGPYMVKNLY (152 aa)).

The protein belongs to the ELP3 family. Component of the elongator complex. Requires [4Fe-4S] cluster as cofactor.

Its subcellular location is the cytoplasm. It localises to the nucleus. It catalyses the reaction uridine(34) in tRNA + acetyl-CoA + S-adenosyl-L-methionine + H2O = 5-(carboxymethyl)uridine(34) in tRNA + 5'-deoxyadenosine + L-methionine + CoA + 2 H(+). It participates in tRNA modification; 5-methoxycarbonylmethyl-2-thiouridine-tRNA biosynthesis. Functionally, catalytic tRNA acetyltransferase subunit of the elongator complex which is required for multiple tRNA modifications, including mcm5U (5-methoxycarbonylmethyl uridine), mcm5s2U (5-methoxycarbonylmethyl-2-thiouridine), and ncm5U (5-carbamoylmethyl uridine). In the elongator complex, acts as a tRNA uridine(34) acetyltransferase by mediating formation of carboxymethyluridine in the wobble base at position 34 in tRNAs. Involved in neurogenesis. Involved in somite development. The chain is Elongator complex protein 3 from Danio rerio (Zebrafish).